The sequence spans 332 residues: Tetraacyldisaccharide 4'-kinase (332 aa).

Position 55-62 (Gly-55–Thr-62) interacts with ATP.

This sequence belongs to the LpxK family.

It catalyses the reaction a lipid A disaccharide + ATP = a lipid IVA + ADP + H(+). The protein operates within glycolipid biosynthesis; lipid IV(A) biosynthesis; lipid IV(A) from (3R)-3-hydroxytetradecanoyl-[acyl-carrier-protein] and UDP-N-acetyl-alpha-D-glucosamine: step 6/6. Transfers the gamma-phosphate of ATP to the 4'-position of a tetraacyldisaccharide 1-phosphate intermediate (termed DS-1-P) to form tetraacyldisaccharide 1,4'-bis-phosphate (lipid IVA). This is Tetraacyldisaccharide 4'-kinase from Acidithiobacillus ferrooxidans (strain ATCC 53993 / BNL-5-31) (Leptospirillum ferrooxidans (ATCC 53993)).